The primary structure comprises 97 residues: MKTIYDIIIRPVLTEKAVKDNEKKNTLTFEVDMNASKTEIKEAVEKIFNVKVKEVRTLIVKPKPKRFGFRSSGYKKAWKKAIVKVESEKPINIAELV.

Belongs to the universal ribosomal protein uL23 family. Part of the 50S ribosomal subunit. Contacts protein L29, and trigger factor when it is bound to the ribosome.

Its function is as follows. One of the early assembly proteins it binds 23S rRNA. One of the proteins that surrounds the polypeptide exit tunnel on the outside of the ribosome. Forms the main docking site for trigger factor binding to the ribosome. The polypeptide is Large ribosomal subunit protein uL23 (Sulfurihydrogenibium sp. (strain YO3AOP1)).